The sequence spans 314 residues: UDP-N-acetylenolpyruvoylglucosamine reductase (314 aa).

One can recognise an FAD-binding PCMH-type domain in the interval 31-208; the sequence is RIGGPADYYA…LSARFRLTPK (178 aa). Residue Arg187 is part of the active site. Residue Ser237 is the Proton donor of the active site. Residue Glu307 is part of the active site.

The protein belongs to the MurB family. Requires FAD as cofactor.

The protein resides in the cytoplasm. The enzyme catalyses UDP-N-acetyl-alpha-D-muramate + NADP(+) = UDP-N-acetyl-3-O-(1-carboxyvinyl)-alpha-D-glucosamine + NADPH + H(+). The protein operates within cell wall biogenesis; peptidoglycan biosynthesis. In terms of biological role, cell wall formation. The sequence is that of UDP-N-acetylenolpyruvoylglucosamine reductase from Agathobacter rectalis (strain ATCC 33656 / DSM 3377 / JCM 17463 / KCTC 5835 / VPI 0990) (Eubacterium rectale).